Reading from the N-terminus, the 474-residue chain is MSIQAPPRLLELAGQSLLRDQALSISAMEELPRVLYLPLFMEAFRRRHFQTLTVMVQAWPFTCLPLGSLMKTLHLETLKALLEGLHMLLTQKDRPRRRKLQVLDLRDVDENFWARWPGAWALSCFPETMSKRQTAEDRPRMGEHQPLKVFIDICLKEIPQDECLRYLFQWVYQRRGLVHLCCSKLVNYLTPIKHLRKSLKIIYLNSIQELEIHNMSWPRLIRKLRCYLKEMKTLGKLVFSRCHHSTSDNELEGRLVTKFSSVFLGLEHLQLLKIKLITFFSGHLEQLIRCLQNPLENLELTYGYLLEEDVKCLSQYPSLGYLKHLNLSYVLLFRISLEPLGALLEKIAASLETLILEGCQIHYSQLSAILPGLSRCSQLTTFYFGRNCMSMGALKDLLRHTSGLSKLSLETYPAPEESLNSLVRVNWEIFTPLRAELMCTLREVRQPKRIFIGPTPCPSCGSSLSEELELHLCC.

The LRR 1; degenerate repeat unit spans residues 97–124 (RRKLQVLDLRDVDENFWARWPGAWALSC). One copy of the LRR 2; degenerate repeat lies at 179 to 203 (HLCCSKLVNYLTPIKHLRKSLKIIY). The LRR 3; degenerate repeat unit spans residues 204–230 (LNSIQELEIHNMSWPRLIRKLRCYLKE). The stretch at 231 to 265 (MKTLGKLVFSRCHHSTSDNELEGRLVTKFSSVFLG) is one LRR 4; degenerate repeat. 5 LRR repeats span residues 266–291 (LEHL…IRCL), 292–323 (QNPL…GYLK), 324–342 (HLNL…PLGA), 348–375 (AASL…GLSR), and 376–400 (CSQL…LLRH).

The protein belongs to the PRAME family.

The protein is PRAME family member 13 of Homo sapiens (Human).